Here is a 513-residue protein sequence, read N- to C-terminus: ATP synthase subunit alpha (513 aa).

169-176 (GDRQTGKT) is a binding site for ATP.

Belongs to the ATPase alpha/beta chains family. F-type ATPases have 2 components, CF(1) - the catalytic core - and CF(0) - the membrane proton channel. CF(1) has five subunits: alpha(3), beta(3), gamma(1), delta(1), epsilon(1). CF(0) has three main subunits: a(1), b(2) and c(9-12). The alpha and beta chains form an alternating ring which encloses part of the gamma chain. CF(1) is attached to CF(0) by a central stalk formed by the gamma and epsilon chains, while a peripheral stalk is formed by the delta and b chains.

The protein localises to the cell inner membrane. The catalysed reaction is ATP + H2O + 4 H(+)(in) = ADP + phosphate + 5 H(+)(out). Its function is as follows. Produces ATP from ADP in the presence of a proton gradient across the membrane. The alpha chain is a regulatory subunit. The chain is ATP synthase subunit alpha from Actinobacillus pleuropneumoniae serotype 7 (strain AP76).